We begin with the raw amino-acid sequence, 458 residues long: Phosphoglucosamine mutase (458 aa).

The active-site Phosphoserine intermediate is Ser108. Ser108, Asp247, Asp249, and Asp251 together coordinate Mg(2+). Ser108 carries the phosphoserine modification.

This sequence belongs to the phosphohexose mutase family. Mg(2+) is required as a cofactor. Post-translationally, activated by phosphorylation.

It carries out the reaction alpha-D-glucosamine 1-phosphate = D-glucosamine 6-phosphate. In terms of biological role, catalyzes the conversion of glucosamine-6-phosphate to glucosamine-1-phosphate. In Nitrosomonas eutropha (strain DSM 101675 / C91 / Nm57), this protein is Phosphoglucosamine mutase.